The chain runs to 468 residues: 3-isopropylmalate dehydratase large subunit (468 aa).

The [4Fe-4S] cluster site is built by C347, C407, and C410.

The protein belongs to the aconitase/IPM isomerase family. LeuC type 1 subfamily. As to quaternary structure, heterodimer of LeuC and LeuD. The cofactor is [4Fe-4S] cluster.

It catalyses the reaction (2R,3S)-3-isopropylmalate = (2S)-2-isopropylmalate. It functions in the pathway amino-acid biosynthesis; L-leucine biosynthesis; L-leucine from 3-methyl-2-oxobutanoate: step 2/4. Catalyzes the isomerization between 2-isopropylmalate and 3-isopropylmalate, via the formation of 2-isopropylmaleate. The chain is 3-isopropylmalate dehydratase large subunit from Campylobacter jejuni (strain RM1221).